Here is a 119-residue protein sequence, read N- to C-terminus: Large ribosomal subunit protein bL19 (119 aa).

It belongs to the bacterial ribosomal protein bL19 family.

Its function is as follows. This protein is located at the 30S-50S ribosomal subunit interface and may play a role in the structure and function of the aminoacyl-tRNA binding site. In Limosilactobacillus fermentum (strain NBRC 3956 / LMG 18251) (Lactobacillus fermentum), this protein is Large ribosomal subunit protein bL19.